Consider the following 72-residue polypeptide: Alpha-elapitoxin-Dpp2d (72 aa).

Cystine bridges form between Cys3/Cys21, Cys14/Cys42, Cys27/Cys31, Cys46/Cys57, and Cys58/Cys63. Arg72 is subject to Arginine amide.

It belongs to the three-finger toxin family. Long-chain subfamily. Type II alpha-neurotoxin sub-subfamily. In terms of assembly, monomer (predominant). Amidation does not significantly affect toxin selectivity, since the activity profile and binding data are reminiscent of classical long-chain 3-finger toxins with a free carboxyl termini. In terms of tissue distribution, expressed by the venom gland.

It is found in the secreted. Functionally, binds with high affinity to muscular (IC(50)=114 nM) and neuronal (alpha-7/CHRNA7) (IC(50)=58 nM) nicotinic acetylcholine receptor (nAChR) and inhibits acetylcholine from binding to the receptor, thereby impairing neuromuscular and neuronal transmission. Competitive radioligand binding assays also demonstrate that this toxin competes with epibatidine binding to the Lymnaea stagnalis acetylcholine-binding protein (Ls-AChBP) (IC(50)=4.9 nM). This Dendroaspis polylepis polylepis (Black mamba) protein is Alpha-elapitoxin-Dpp2d.